The following is a 121-amino-acid chain: Large ribosomal subunit protein uL18 (121 aa).

The protein belongs to the universal ribosomal protein uL18 family. As to quaternary structure, part of the 50S ribosomal subunit; part of the 5S rRNA/L5/L18/L25 subcomplex. Contacts the 5S and 23S rRNAs.

In terms of biological role, this is one of the proteins that bind and probably mediate the attachment of the 5S RNA into the large ribosomal subunit, where it forms part of the central protuberance. This Mesomycoplasma hyopneumoniae (strain 232) (Mycoplasma hyopneumoniae) protein is Large ribosomal subunit protein uL18.